The sequence spans 265 residues: Hydroxyethylthiazole kinase (265 aa).

M50 is a binding site for substrate. 2 residues coordinate ATP: R125 and T171. G198 lines the substrate pocket.

This sequence belongs to the Thz kinase family. The cofactor is Mg(2+).

The enzyme catalyses 5-(2-hydroxyethyl)-4-methylthiazole + ATP = 4-methyl-5-(2-phosphooxyethyl)-thiazole + ADP + H(+). It participates in cofactor biosynthesis; thiamine diphosphate biosynthesis; 4-methyl-5-(2-phosphoethyl)-thiazole from 5-(2-hydroxyethyl)-4-methylthiazole: step 1/1. Its function is as follows. Catalyzes the phosphorylation of the hydroxyl group of 4-methyl-5-beta-hydroxyethylthiazole (THZ). The polypeptide is Hydroxyethylthiazole kinase (Salmonella schwarzengrund (strain CVM19633)).